The chain runs to 432 residues: Phosphomethylpyrimidine synthase (432 aa).

Substrate is bound by residues Asn-66, Met-95, Tyr-124, His-163, 185–187 (SRG), 226–229 (DGLR), and Glu-265. His-269 lines the Zn(2+) pocket. Substrate is bound at residue Tyr-292. His-333 is a Zn(2+) binding site. Residues Cys-409, Cys-412, and Cys-416 each contribute to the [4Fe-4S] cluster site.

This sequence belongs to the ThiC family. [4Fe-4S] cluster is required as a cofactor.

The enzyme catalyses 5-amino-1-(5-phospho-beta-D-ribosyl)imidazole + S-adenosyl-L-methionine = 4-amino-2-methyl-5-(phosphooxymethyl)pyrimidine + CO + 5'-deoxyadenosine + formate + L-methionine + 3 H(+). It functions in the pathway cofactor biosynthesis; thiamine diphosphate biosynthesis. Its function is as follows. Catalyzes the synthesis of the hydroxymethylpyrimidine phosphate (HMP-P) moiety of thiamine from aminoimidazole ribotide (AIR) in a radical S-adenosyl-L-methionine (SAM)-dependent reaction. This chain is Phosphomethylpyrimidine synthase, found in Desulfitobacterium hafniense (strain DSM 10664 / DCB-2).